A 351-amino-acid polypeptide reads, in one-letter code: Lipoyl synthase (351 aa).

The segment covering methionine 1–valine 10 has biased composition (polar residues). The disordered stretch occupies residues methionine 1–arginine 27. A compositionally biased stretch (low complexity) spans proline 14 to proline 24. Cysteine 74, cysteine 79, cysteine 85, cysteine 100, cysteine 104, cysteine 107, and serine 311 together coordinate [4Fe-4S] cluster. Positions tryptophan 86–serine 300 constitute a Radical SAM core domain.

The protein belongs to the radical SAM superfamily. Lipoyl synthase family. [4Fe-4S] cluster is required as a cofactor.

The protein localises to the cytoplasm. It catalyses the reaction [[Fe-S] cluster scaffold protein carrying a second [4Fe-4S](2+) cluster] + N(6)-octanoyl-L-lysyl-[protein] + 2 oxidized [2Fe-2S]-[ferredoxin] + 2 S-adenosyl-L-methionine + 4 H(+) = [[Fe-S] cluster scaffold protein] + N(6)-[(R)-dihydrolipoyl]-L-lysyl-[protein] + 4 Fe(3+) + 2 hydrogen sulfide + 2 5'-deoxyadenosine + 2 L-methionine + 2 reduced [2Fe-2S]-[ferredoxin]. Its pathway is protein modification; protein lipoylation via endogenous pathway; protein N(6)-(lipoyl)lysine from octanoyl-[acyl-carrier-protein]: step 2/2. Functionally, catalyzes the radical-mediated insertion of two sulfur atoms into the C-6 and C-8 positions of the octanoyl moiety bound to the lipoyl domains of lipoate-dependent enzymes, thereby converting the octanoylated domains into lipoylated derivatives. This Tropheryma whipplei (strain TW08/27) (Whipple's bacillus) protein is Lipoyl synthase.